A 365-amino-acid chain; its full sequence is D-alanine--D-alanine ligase (365 aa).

Positions 140–346 constitute an ATP-grasp domain; sequence KKILRRHGLQ…YSQLLTDLIY (207 aa). 173 to 228 is a binding site for ATP; the sequence is EKQLSYPIFVKPANLGSSVGISKVKNREELIQGIDLAVKYDMKCLAEEFIPGKEIE. Mg(2+) contacts are provided by Asp-299, Glu-313, and Asn-315.

This sequence belongs to the D-alanine--D-alanine ligase family. Mg(2+) serves as cofactor. It depends on Mn(2+) as a cofactor.

It is found in the cytoplasm. The enzyme catalyses 2 D-alanine + ATP = D-alanyl-D-alanine + ADP + phosphate + H(+). Its pathway is cell wall biogenesis; peptidoglycan biosynthesis. Its function is as follows. Cell wall formation. This chain is D-alanine--D-alanine ligase, found in Natranaerobius thermophilus (strain ATCC BAA-1301 / DSM 18059 / JW/NM-WN-LF).